The primary structure comprises 304 residues: E3 ubiquitin-protein ligase BOI (304 aa).

A WRD domain region spans residues 178-214 (LQERVKSLYVENQIWRDIAQTNEANANTLRTNLDQVL). Positions 197-220 (QTNEANANTLRTNLDQVLAQLETF) form a coiled coil. The segment at 254 to 291 (CKRCGEREASVLVLPCRHLCLCTVCGGSALLRTCPVCD) adopts an RING-type zinc-finger fold.

Interacts with MYB108/BOS1 and the DELLA proteins GAI, RGA, RGL1, RGL2 and RGL3. Expressed in leaves, siliques, roots, flowering tissues and stigma tips.

It is found in the nucleus. The enzyme catalyses S-ubiquitinyl-[E2 ubiquitin-conjugating enzyme]-L-cysteine + [acceptor protein]-L-lysine = [E2 ubiquitin-conjugating enzyme]-L-cysteine + N(6)-ubiquitinyl-[acceptor protein]-L-lysine.. It functions in the pathway protein degradation; proteasomal ubiquitin-dependent pathway. Functionally, E3 ubiquitin-protein ligase involved in the regulation of pathogen and abiotic stress responses by facilitating degradation of MYB108/BOI. Attenuates cell death by preventing caspase activation. Has no effect on the stability of the DELLA proteins. Not regulated by MYB108/BOI. In Arabidopsis thaliana (Mouse-ear cress), this protein is E3 ubiquitin-protein ligase BOI (BOI).